A 305-amino-acid chain; its full sequence is Oxygen-dependent coproporphyrinogen-III oxidase (305 aa).

Serine 98 is a binding site for substrate. A divalent metal cation-binding residues include histidine 102 and histidine 112. Histidine 112 functions as the Proton donor in the catalytic mechanism. 114 to 116 (NVR) is a substrate binding site. Histidine 151 and histidine 181 together coordinate a divalent metal cation. The important for dimerization stretch occupies residues 246 to 281 (YVEFNLVYDRGTLFGLQSGGRTESILMSMPPLARWE). 264-266 (GGR) lines the substrate pocket.

It belongs to the aerobic coproporphyrinogen-III oxidase family. Homodimer. A divalent metal cation serves as cofactor.

The protein resides in the cytoplasm. It carries out the reaction coproporphyrinogen III + O2 + 2 H(+) = protoporphyrinogen IX + 2 CO2 + 2 H2O. It functions in the pathway porphyrin-containing compound metabolism; protoporphyrin-IX biosynthesis; protoporphyrinogen-IX from coproporphyrinogen-III (O2 route): step 1/1. Its function is as follows. Involved in the heme biosynthesis. Catalyzes the aerobic oxidative decarboxylation of propionate groups of rings A and B of coproporphyrinogen-III to yield the vinyl groups in protoporphyrinogen-IX. The chain is Oxygen-dependent coproporphyrinogen-III oxidase from Vibrio atlanticus (strain LGP32) (Vibrio splendidus (strain Mel32)).